We begin with the raw amino-acid sequence, 260 residues long: Carbonic anhydrase 2 (260 aa).

Positions 3-259 (HGWGYADHNG…LKDRKVCASF (257 aa)) constitute an Alpha-carbonic anhydrase domain. The active-site Proton donor/acceptor is His-64. The Zn(2+) site is built by His-94, His-96, and His-119. A substrate-binding site is contributed by 198–199 (TT).

This sequence belongs to the alpha-carbonic anhydrase family. It depends on Zn(2+) as a cofactor.

It localises to the cytoplasm. It carries out the reaction hydrogencarbonate + H(+) = CO2 + H2O. Catalyzes the reversible hydration of carbon dioxide. In Pseudaspius hakonensis (Big-scaled redfin), this protein is Carbonic anhydrase 2 (ca2).